The chain runs to 265 residues: Indole-3-glycerol phosphate synthase (265 aa).

The protein belongs to the TrpC family.

It carries out the reaction 1-(2-carboxyphenylamino)-1-deoxy-D-ribulose 5-phosphate + H(+) = (1S,2R)-1-C-(indol-3-yl)glycerol 3-phosphate + CO2 + H2O. It participates in amino-acid biosynthesis; L-tryptophan biosynthesis; L-tryptophan from chorismate: step 4/5. The polypeptide is Indole-3-glycerol phosphate synthase (Xanthomonas oryzae pv. oryzae (strain MAFF 311018)).